A 142-amino-acid chain; its full sequence is MVLSAADKTNVKAAWSKVGGNAGEFGAEALERMFLGFPTTKTYFPHFDLSHGSAQVKAHGKKVGDALTLAVGHLDDLPGALSNLSDLHAHKLRVDPVNFKLLSHCLLSTLAVHLPNDFTPAVHASLDKFLSTVSTVLTSKYR.

Residues 2 to 142 (VLSAADKTNV…VSTVLTSKYR (141 aa)) enclose the Globin domain. Position 4 is a phosphoserine (serine 4). The residue at position 8 (lysine 8) is an N6-succinyllysine. Threonine 9 is modified (phosphothreonine). An N6-succinyllysine modification is found at lysine 12. Lysine 17 carries the N6-acetyllysine; alternate modification. Residue lysine 17 is modified to N6-succinyllysine; alternate. Position 41 is an N6-succinyllysine (lysine 41). Serine 50 carries the post-translational modification Phosphoserine. Residue histidine 59 participates in O2 binding. Histidine 88 contributes to the heme b binding site. Serine 103 is modified (phosphoserine). Threonine 109 is subject to Phosphothreonine. At serine 125 the chain carries Phosphoserine. Threonine 135 and threonine 138 each carry phosphothreonine. Phosphoserine is present on serine 139.

The protein belongs to the globin family. Heterotetramer of two alpha chains and two beta chains. In terms of tissue distribution, red blood cells.

In terms of biological role, involved in oxygen transport from the lung to the various peripheral tissues. Its function is as follows. Hemopressin acts as an antagonist peptide of the cannabinoid receptor CNR1. Hemopressin-binding efficiently blocks cannabinoid receptor CNR1 and subsequent signaling. The protein is Hemoglobin subunit alpha (HBA) of Equus zebra (Mountain zebra).